The chain runs to 66 residues: Phylloseptin-H8 (66 aa).

Positions 1–22 (MAFLKKSLFLVLFLGLVSLSIC) are cleaved as a signal peptide. A propeptide spanning residues 23–44 (EEEKRETEEEENDQEEDDKSEE) is cleaved from the precursor. Positions 25 to 44 (EKRETEEEENDQEEDDKSEE) are disordered. Residues 30–41 (EEEENDQEEDDK) show a composition bias toward acidic residues. A Leucine amide modification is found at Leu-65.

In terms of tissue distribution, expressed by the skin glands.

Its subcellular location is the secreted. In terms of biological role, has antimicrobial activity. This Pithecopus hypochondrialis (Orange-legged leaf frog) protein is Phylloseptin-H8.